Consider the following 200-residue polypeptide: High mobility group protein B3 (200 aa).

Position 3 is an N6-acetyllysine (Lys-3). DNA-binding regions (HMG box) lie at residues 9 to 79 (PKGK…KDYG) and 93 to 161 (PKRP…ADYK). At Cys-23 the chain carries Cysteine sulfonic acid (-SO3H); alternate. Cys-23 and Cys-45 are oxidised to a cystine. Residues Lys-30 and Lys-43 each carry the N6-acetyllysine modification. At Cys-45 the chain carries Cysteine sulfonic acid (-SO3H); alternate. The interval 71-97 (YDREMKDYGPAKGGKKKKDPNAPKRPP) is disordered. Position 98 is a phosphoserine (Ser-98). Cysteine sulfonic acid (-SO3H) is present on Cys-104. N6-acetyllysine is present on residues Lys-112 and Lys-139. The disordered stretch occupies residues 163–200 (KGKFDGAKGAAKVARKKVEEEDEEDEEEEEEEEEEEDE). Residues 182-200 (EEDEEDEEEEEEEEEEEDE) show a composition bias toward acidic residues.

Belongs to the HMGB family. Post-translationally, reduction/oxidation of cysteine residues Cys-23, Cys-45 and Cys-104 and a possible intramolecular disulfide bond involving Cys-23 and Cys-45 give rise to different redox forms with specific functional activities in various cellular compartments: 1- fully reduced HMGB3 (HMGB3C23hC45hC104h), 2- disulfide HMGB3 (HMGB3C23-C45C104h) and 3- sulfonyl HMGB3 (HMGB3C23soC45soC104so).

The protein localises to the nucleus. Its subcellular location is the chromosome. It is found in the cytoplasm. In terms of biological role, multifunctional protein with various roles in different cellular compartments. May act in a redox sensitive manner. Associates with chromatin and binds DNA with a preference for non-canonical DNA structures such as single-stranded DNA. Can bend DNA and enhance DNA flexibility by looping thus providing a mechanism to promote activities on various gene promoters. Proposed to be involved in the innate immune response to nucleic acids by acting as a cytoplasmic promiscuous immunogenic DNA/RNA sensor. Negatively regulates B-cell and myeloid cell differentiation. In hematopoietic stem cells may regulate the balance between self-renewal and differentiation. Involved in negative regulation of canonical Wnt signaling. The protein is High mobility group protein B3 (HMGB3) of Bos taurus (Bovine).